A 276-amino-acid chain; its full sequence is Large ribosomal subunit protein uL2 (276 aa).

The interval 224–276 is disordered; that stretch reads VMNPVDHPHGGGEGKAPIGRKSPMTPWGKPTLGYKTRKKKNKSDKFIIRRRKK. Basic residues predominate over residues 258–276; sequence KTRKKKNKSDKFIIRRRKK.

This sequence belongs to the universal ribosomal protein uL2 family. As to quaternary structure, part of the 50S ribosomal subunit. Forms a bridge to the 30S subunit in the 70S ribosome.

Functionally, one of the primary rRNA binding proteins. Required for association of the 30S and 50S subunits to form the 70S ribosome, for tRNA binding and peptide bond formation. It has been suggested to have peptidyltransferase activity; this is somewhat controversial. Makes several contacts with the 16S rRNA in the 70S ribosome. The polypeptide is Large ribosomal subunit protein uL2 (Geobacillus kaustophilus (strain HTA426)).